A 40-amino-acid chain; its full sequence is Protamine-2 (40 aa).

The tract at residues 1-40 (MPPRRKRVSSAPRRRRRTYRRTTAHKHQERPVHRRRRRRH) is disordered.

In terms of tissue distribution, testis.

It is found in the nucleus. Its subcellular location is the chromosome. In terms of biological role, protamines substitute for histones in the chromatin of sperm during the haploid phase of spermatogenesis. They compact sperm DNA into a highly condensed, stable and inactive complex. The sequence is that of Protamine-2 (PBP2) from Bufo japonicus (Japanese common toad).